Consider the following 488-residue polypeptide: MSFNHKTIEELHDLLVAKEISATELTQATLEDIKSREEAVGSFITVSEEVALKQAAAIDAKGIDADNLMSGIPLAVKDNISTKEILTTAASKMLYNYEPIFNATSVANAYAKDMIVIGKTNMDEFAMGGSTETSYFKKTKNAWDHTKVPGGSSGGSATAVASGQVRLSLGSDTGGSIRQPAAFNSVVGLKPTYGTVSRYGLIAFGSSLDQIGPFAPTVKENAQLLNVIASSDVKDATSAPVRIADYTSKIGRDIKGMKIALPKEYLGEGIDPEIKETVLASVKQFEALGATVEEVSLPHSKYGVAVYYIIASSEASSNLQRFDGIRYGFRADDAKNLDEIYVNTRSQGFGDEVKRRIMLGTFSLSSGYYDAYFKKAGQVRTLIIQDFDKVFADYDLILGPTTPTVAFGLDTLNHDPVAMYLADLLTIPVNLAGLPGISIPAGFVDGLPVGLQLIGPKYAEETIYQAAAAFEAVTDYHKQQPIIFGGDK.

Catalysis depends on charge relay system residues K77 and S152. S176 serves as the catalytic Acyl-ester intermediate.

The protein belongs to the amidase family. GatA subfamily. Heterotrimer of A, B and C subunits.

The enzyme catalyses L-glutamyl-tRNA(Gln) + L-glutamine + ATP + H2O = L-glutaminyl-tRNA(Gln) + L-glutamate + ADP + phosphate + H(+). Functionally, allows the formation of correctly charged Gln-tRNA(Gln) through the transamidation of misacylated Glu-tRNA(Gln) in organisms which lack glutaminyl-tRNA synthetase. The reaction takes place in the presence of glutamine and ATP through an activated gamma-phospho-Glu-tRNA(Gln). The protein is Glutamyl-tRNA(Gln) amidotransferase subunit A of Streptococcus pyogenes serotype M1.